We begin with the raw amino-acid sequence, 396 residues long: Tryptophan synthase beta chain (396 aa).

Residue Lys-90 is modified to N6-(pyridoxal phosphate)lysine.

This sequence belongs to the TrpB family. As to quaternary structure, tetramer of two alpha and two beta chains. Requires pyridoxal 5'-phosphate as cofactor.

The catalysed reaction is (1S,2R)-1-C-(indol-3-yl)glycerol 3-phosphate + L-serine = D-glyceraldehyde 3-phosphate + L-tryptophan + H2O. Its pathway is amino-acid biosynthesis; L-tryptophan biosynthesis; L-tryptophan from chorismate: step 5/5. Functionally, the beta subunit is responsible for the synthesis of L-tryptophan from indole and L-serine. This is Tryptophan synthase beta chain from Clostridium kluyveri (strain NBRC 12016).